The chain runs to 88 residues: HssA/B-like protein 12 (88 aa).

It belongs to the hssA/B family.

The chain is HssA/B-like protein 12 (hssl12) from Dictyostelium discoideum (Social amoeba).